An 805-amino-acid polypeptide reads, in one-letter code: Replication restart protein PriA (805 aa).

Residues 1–110 form a 3'BD region; that stretch reads MNFAEVIVDV…QAMLPAALKA (110 aa). The tract at residues 111-166 is linker; the sequence is KYEKELKIAHGADLPPQVERLFSETKTLLYSDIPDHETLKLIQRHVQKGDIDVTYK. Residues 167–253 are WH; that stretch reads VAQKTNKKMV…KESYEEVYRD (87 aa). Positions 282–448 constitute a Helicase ATP-binding domain; sequence TLDSDEHKVF…QKGVYELLSL (167 aa). Residue 295-302 coordinates ATP; the sequence is GVTGSGKT. Positions 391 to 394 match the DEAH box motif; the sequence is DEEH. 8 residues coordinate Zn(2+): Cys-510, Cys-513, Cys-519, Cys-522, Cys-537, Cys-540, Cys-550, and Cys-553. One can recognise a Helicase C-terminal domain in the interval 545-699; that stretch reads PVPHTCPECA…TFYQHEMAHR (155 aa).

Belongs to the helicase family. PriA subfamily. In terms of assembly, monomer. Component of the replication restart primosome which assembles in this order; PriA, DnaD then DnaB. The preferred DNA substrate mimics an arrested DNA replication fork with unreplicated lagging strand. Interacts with DnaD but not DnaB. Interacts with SSB (sbbA) via the latter's 35 residue C-terminal tail which tethers PriA to ssDNA. Colocalizes with DNA pol III subunit gamma/tau (dnaX). May interact with RarA. It depends on Zn(2+) as a cofactor.

It is found in the cytoplasm. Its subcellular location is the nucleoid. The catalysed reaction is Couples ATP hydrolysis with the unwinding of duplex DNA by translocating in the 3'-5' direction.. It catalyses the reaction ATP + H2O = ADP + phosphate + H(+). In terms of biological role, initiates the restart of stalled replication forks, which reloads the replicative helicase on sites other than the origin of replication. Recognizes and binds to abandoned replication forks and remodels them to uncover a helicase loading site. Promotes assembly of the primosome at these replication forks. Serves as the initiating protein for assembly of the replication restart primosome; binding of PriA to an arrested DNA replication fork with unreplicated lagging strand triggers assembly. Sequentially DnaD (possibly as a dimer) and DnaB homotetramers bind. Assembly probably continues by loading of the DnaC replicative helicase aided by helicase loader DnaI. A single-strand (ss)DNA-dependent ATPase with helicase activity. Recognizes and binds the arrested nascent DNA chain at stalled replication forks. Binds forked DNA substrates and makes a larger complex with RarA; RarA has no effect on the helicase function. Binds ssDNA, D-loops and replication fork-like substrates but not double-stranded (ds)DNA; the preferred DNA substrate mimics an arrested DNA replication fork with an unreplicated lagging strand. Recognizes nicked dsDNA. A supershift on ssDNA occurs in the presence of single-stranded binding protein (SSB). Cannot substitute for E.coli PriA. Required for replication of plasmids that have a rolling circle mechanism, which produces circular single-stranded (ss)DNA intermediates corresponding to the lagging strand template, which are then converted into double-stranded (ds)DNA; priA is required to activate the conversion of ssDNA into dsDNA. The sequence is that of Replication restart protein PriA from Bacillus subtilis (strain 168).